The sequence spans 2763 residues: Large tegument protein deneddylase (2763 aa).

Residues 1–247 (MDIIPPIAVT…CDTYFTDEQY (247 aa)) form a deubiquitination activity region. The region spanning 12–237 (AGVGSRNQFD…SSAVTLIYGS (226 aa)) is the Peptidase C76 domain. Residues C32, D168, and H170 contribute to the active site. The segment at 495–523 (LELFINLTILRLTGFVVENGTRTHHGATS) is interaction with inner tegument protein. 8 consecutive repeat copies span residues 2455–2457 (PVQ), 2458–2460 (PVQ), 2461–2463 (PAQ), 2464–2466 (PVQ), 2467–2469 (PAQ), 2470–2472 (PAQ), 2473–2475 (PVQ), and 2476–2478 (PAQ). Positions 2455 to 2478 (PVQPVQPAQPVQPAQPAQPVQPAQ) are 8 X 3 AA repeats of P-A/V-Q. Residues 2630–2651 (NYKTRQPSPNFPRDVHTWGVSS) form a disordered region.

It belongs to the herpesviridae large tegument protein family. Interacts with host CUL1 and CUL4A; these interactions inhibit the E3 ligase activity of cullins. Interacts with inner tegument protein. Interacts with capsid vertex specific component CVC2. Interacts with the major capsid protein/MCP.

The protein localises to the virion tegument. The protein resides in the host cytoplasm. It is found in the host nucleus. It catalyses the reaction Thiol-dependent hydrolysis of ester, thioester, amide, peptide and isopeptide bonds formed by the C-terminal Gly of ubiquitin (a 76-residue protein attached to proteins as an intracellular targeting signal).. In terms of biological role, large tegument protein that plays multiple roles in the viral cycle. During viral entry, remains associated with the capsid while most of the tegument is detached and participates in the capsid transport toward the host nucleus. Plays a role in the routing of the capsid at the nuclear pore complex and subsequent uncoating. Within the host nucleus, acts as a deneddylase and promotes the degradation of nuclear CRLs (cullin-RING ubiquitin ligases) and thereby stabilizes nuclear CRL substrates, while cytoplasmic CRLs remain unaffected. These modifications prevent host cell cycle S-phase progression and create a favorable environment allowing efficient viral genome replication. Participates later in the secondary envelopment of capsids. Indeed, plays a linker role for the association of the outer viral tegument to the capsids together with the inner tegument protein. The polypeptide is Large tegument protein deneddylase (Varicella-zoster virus (strain Oka vaccine) (HHV-3)).